A 227-amino-acid polypeptide reads, in one-letter code: Translation initiation factor 6 (227 aa).

Belongs to the eIF-6 family.

In terms of biological role, binds to the 50S ribosomal subunit and prevents its association with the 30S ribosomal subunit to form the 70S initiation complex. The sequence is that of Translation initiation factor 6 from Methanococcus maripaludis (strain DSM 14266 / JCM 13030 / NBRC 101832 / S2 / LL).